The primary structure comprises 524 residues: Lysophospholipid acyltransferase LPCAT4 (524 aa).

A run of 2 helical transmembrane segments spans residues 40–62 and 87–107; these read CLLGALLAPIRVLLAFIVLFLLW and TVCHNGVLGLSRLLFFLLGFL. The HXXXXD motif signature appears at 129 to 134; the sequence is HSTFFD. Asn-152 carries N-linked (GlcNAc...) asparagine glycosylation. The tract at residues 489 to 524 is disordered; the sequence is PPHTSRGTSQTPNASSPGNPTALANGTVQAPKQKGD. A compositionally biased stretch (polar residues) spans 493–518; the sequence is SRGTSQTPNASSPGNPTALANGTVQA.

Belongs to the 1-acyl-sn-glycerol-3-phosphate acyltransferase family. Widely expressed with predominant level in brain.

Its subcellular location is the endoplasmic reticulum membrane. The catalysed reaction is a 1-acyl-sn-glycero-3-phosphoethanolamine + an acyl-CoA = a 1,2-diacyl-sn-glycero-3-phosphoethanolamine + CoA. The enzyme catalyses a 1-O-(1Z-alkenyl)-sn-glycero-3-phosphoethanolamine + an acyl-CoA = a 1-O-(1Z-alkenyl)-2-acyl-sn-glycero-3-phosphoethanolamine + CoA. It carries out the reaction a 1-acyl-sn-glycero-3-phosphocholine + an acyl-CoA = a 1,2-diacyl-sn-glycero-3-phosphocholine + CoA. It catalyses the reaction a 1-O-alkyl-sn-glycero-3-phosphocholine + acetyl-CoA = a 1-O-alkyl-2-acetyl-sn-glycero-3-phosphocholine + CoA. The catalysed reaction is a 1-acyl-sn-glycero-3-phospho-L-serine + an acyl-CoA = a 1,2-diacyl-sn-glycero-3-phospho-L-serine + CoA. The enzyme catalyses octanoyl-CoA + a 1-acyl-sn-glycero-3-phosphoethanolamine = 1-acyl-2-octanoyl-sn-glycero-3-phosphoethanolamine + CoA. It carries out the reaction a 1-acyl-sn-glycero-3-phosphoethanolamine + hexadecanoyl-CoA = 1-acyl-2-hexadecanoyl-sn-glycero-3-phosphoethanolamine + CoA. It catalyses the reaction a 1-acyl-sn-glycero-3-phosphoethanolamine + octadecanoyl-CoA = 1-acyl-2-octadecanoyl-sn-glycero-3-phosphoethanolamine + CoA. The catalysed reaction is a 1-acyl-sn-glycero-3-phosphoethanolamine + (9Z)-octadecenoyl-CoA = 1-acyl-2-(9Z)-octadecenoyl-sn-glycero-3-phosphoethanolamine + CoA. The enzyme catalyses a 1-acyl-sn-glycero-3-phosphoethanolamine + (5Z,8Z,11Z,14Z)-eicosatetraenoyl-CoA = 1-acyl-2-(5Z,8Z,11Z,14Z)-eicosatetraenoyl-sn-glycero-3-phosphoethanolamine + CoA. It carries out the reaction a 1-O-(1Z-alkenyl)-sn-glycero-3-phosphoethanolamine + octanoyl-CoA = 1-O-(1Z)-alkenyl-2-octanoyl-sn-glycero-3-phosphoethanolamine + CoA. It catalyses the reaction a 1-O-(1Z-alkenyl)-sn-glycero-3-phosphoethanolamine + hexadecanoyl-CoA = 1-O-(1Z)-alkenyl-2-hexadecanoyl-sn-glycero-3-phosphoethanolamine + CoA. The catalysed reaction is a 1-O-(1Z-alkenyl)-sn-glycero-3-phosphoethanolamine + octadecanoyl-CoA = 1-O-(1Z)-alkenyl-2-octadecanoyl-sn-glycero-3-phosphoethanolamine + CoA. The enzyme catalyses a 1-O-(1Z-alkenyl)-sn-glycero-3-phosphoethanolamine + (9Z)-octadecenoyl-CoA = 1-O-(1Z)-alkenyl-2-(9Z)-octadecenoyl-sn-glycero-3-phosphoethanolamine + CoA. It carries out the reaction a 1-O-(1Z-alkenyl)-sn-glycero-3-phosphoethanolamine + (5Z,8Z,11Z,14Z)-eicosatetraenoyl-CoA = 1-O-(1Z)-alkenyl-2-(5Z,8Z,11Z,14Z)-eicosatetraenoyl-sn-glycero-3-phosphoethanolamine + CoA. It catalyses the reaction a 1-acyl-sn-glycero-3-phosphocholine + hexadecanoyl-CoA = 1-acyl-2-hexadecanoyl-sn-glycero-3-phosphocholine + CoA. The catalysed reaction is a 1-acyl-sn-glycero-3-phosphocholine + (9Z)-octadecenoyl-CoA = a 1-acyl-2-(9Z)-octadecenoyl-sn-glycero-3-phosphocholine + CoA. The enzyme catalyses 1-O-hexadecyl-sn-glycero-3-phosphocholine + (9Z)-octadecenoyl-CoA = 1-O-hexadecyl-2-(9Z)-octadecenoyl-sn-glycero-3-phosphocholine + CoA. It carries out the reaction 1-O-hexadecyl-sn-glycero-3-phosphocholine + (5Z,8Z,11Z,14Z)-eicosatetraenoyl-CoA = 1-O-hexadecyl-2-(5Z,8Z,11Z,14Z)-eicosatetraenoyl-sn-glycero-3-phosphocholine + CoA. It catalyses the reaction 1-hexadecanoyl-sn-glycero-3-phospho-L-serine + (9Z)-octadecenoyl-CoA = 1-hexadecanoyl-2-(9Z-octadecenoyl)-sn-glycero-3-phospho-L-serine + CoA. The catalysed reaction is 1-octadecanoyl-sn-glycero-3-phospho-(1'-sn-glycerol) + (9Z)-octadecenoyl-CoA = 1-octadecanoyl-2-(9Z-octadecenoyl)-sn-glycero-3-phospho-(1'-sn-glycerol) + CoA. The enzyme catalyses 1-octadecanoyl-sn-glycero-3-phospho-(1'-sn-glycerol) + (5Z,8Z,11Z,14Z)-eicosatetraenoyl-CoA = 1-octadecanoyl-2-(5Z,8Z,11Z,14Z-eicosatetraenoyl)-sn-glycero-3-phospho-(1'-sn-glycerol) + CoA. It functions in the pathway lipid metabolism; phospholipid metabolism. In terms of biological role, displays acyl-CoA-dependent lysophospholipid acyltransferase activity with a subset of lysophospholipids as substrates; converts lysophosphatidylethanolamine to phosphatidylethanolamine, lysophosphatidylcholine to phosphatidycholine, 1-alkenyl-lysophatidylethanolamine to 1-alkenyl-phosphatidylethanolamine, lysophosphatidylglycerol and alkyl-lysophosphatidylcholine to phosphatidylglycerol and alkyl-phosphatidylcholine, respectively. In contrast, has no lysophosphatidylinositol, glycerol-3-phosphate, diacylglycerol or lysophosphatidic acid acyltransferase activity. Prefers long chain acyl-CoAs (C16, C18) as acyl donors. The sequence is that of Lysophospholipid acyltransferase LPCAT4 (LPCAT4) from Homo sapiens (Human).